The following is a 458-amino-acid chain: tRNA modification GTPase MnmE (458 aa).

(6S)-5-formyl-5,6,7,8-tetrahydrofolate-binding residues include arginine 22, glutamate 86, and arginine 125. In terms of domain architecture, TrmE-type G spans 221 to 379 (GIRTVILGRP…LEQTITEMFF (159 aa)). A K(+)-binding site is contributed by asparagine 231. Residues 231–236 (NAGKSS), 250–256 (TEIAGTT), and 275–278 (DTAG) each bind GTP. A Mg(2+)-binding site is contributed by serine 235. The K(+) site is built by threonine 250, isoleucine 252, and threonine 255. Threonine 256 is a Mg(2+) binding site. Lysine 458 is a binding site for (6S)-5-formyl-5,6,7,8-tetrahydrofolate.

It belongs to the TRAFAC class TrmE-Era-EngA-EngB-Septin-like GTPase superfamily. TrmE GTPase family. As to quaternary structure, homodimer. Heterotetramer of two MnmE and two MnmG subunits. It depends on K(+) as a cofactor.

Its subcellular location is the cytoplasm. Exhibits a very high intrinsic GTPase hydrolysis rate. Involved in the addition of a carboxymethylaminomethyl (cmnm) group at the wobble position (U34) of certain tRNAs, forming tRNA-cmnm(5)s(2)U34. The protein is tRNA modification GTPase MnmE of Lachnoclostridium phytofermentans (strain ATCC 700394 / DSM 18823 / ISDg) (Clostridium phytofermentans).